A 165-amino-acid chain; its full sequence is Protoporphyrinogen IX oxidase (165 aa).

The next 4 helical transmembrane spans lie at 26–46, 77–97, 99–119, and 145–165; these read LHVI…RLFV, AMIA…IVDW, MLWP…HMWL, and PTLL…YWGF. Histidine 27 provides a ligand contact to heme. Lysine 105 provides a ligand contact to heme.

The protein belongs to the HemJ family. In terms of assembly, homodimer. The cofactor is heme b.

Its subcellular location is the cell membrane. The catalysed reaction is protoporphyrinogen IX + 3 A = protoporphyrin IX + 3 AH2. The protein operates within porphyrin-containing compound metabolism; protoporphyrin-IX biosynthesis; protoporphyrin-IX from protoporphyrinogen-IX: step 1/1. Functionally, catalyzes the oxidation of protoporphyrinogen IX to protoporphyrin IX. Is involved in the biosynthesis of tetrapyrrole molecules like heme and chlorophyll. Does not use oxygen or artificial electron acceptors such as menadione or benzoquinone. The polypeptide is Protoporphyrinogen IX oxidase (Cereibacter sphaeroides (strain ATCC 17023 / DSM 158 / JCM 6121 / CCUG 31486 / LMG 2827 / NBRC 12203 / NCIMB 8253 / ATH 2.4.1.) (Rhodobacter sphaeroides)).